Reading from the N-terminus, the 843-residue chain is MPLSYQHFRKLLLLDDEAGPLEEELPRLADEGLNHRVAEDLNLGNPNVDIPWTHKVGNFTGLYSSTVPVFNPEWQTPSFPDIHLQEDIVDRCEQFVGPLTVNERRRLKLVMPARFYPKVTKYLPLDKGIKPYYPEHVVNHYFQTRHYLHTLWKAGILYKRESTHSASFCGSPYSWEQDLQHGRLVIQTSKRHGDKSFCPQSPGILPRSSVGPCIQSQLRKSRLGPQPTQGQLAGRPQGGSGSIRARVHPSPWGTVGVEPSGSGHTHICASSSSSCLHQSAVRTAAYSLISTSKGHSSSGHAVELHHFPPNSSRSQSQGPVPSCWWLQFRNSKPCSEYCLCHIVNLIDDWGPCAEHGEHRIRTPRTPARVTGGVFLVDKNPHNTTESRLVVDFSQFSRGNTRVSWPKFAVPNLQSLTNLLSSNLSWLSLDVSAAFYHLPLHPAAMPHLLVGSSGLSRYVARLSSNSRIINHQHGTMQDLHNSCSRNLYVSLMLLYKTYGRKLHLYSHPIILGFRKIPMGVGLSPFLLAQFTSALCSVVRRAFPHCLAFSYMDDVVLGAKSVQHLESLYAAVTNFLLSLGXHLNPHKTKRWGYSLNFMGYVIGSWGTLPQEHIVQKIKLCFRKLPVNRPIDWKVCQRIVGLLGFAAPFTQCGYPALKPLYACIQAKQAFTFSPTYKAFLRQQYLNLYPVARQRPGLCQVFADATPTGWGLAIGHQRMRGTFVSPLPIHTAELLAACFARSRSGAKLIGTDNSVVLSRKYTSFPWLLGCAANWILRGTSFVYVPSALNPADDPSRGRLGLYRPLLRLPYRPTTGRTSLYAVSPSVPSHLPDRVHFASPLHVAWRPP.

Residues 1–177 (MPLSYQHFRK…FCGSPYSWEQ (177 aa)) are terminal protein domain (TP). The spacer stretch occupies residues 178–346 (DLQHGRLVIQ…YCLCHIVNLI (169 aa)). Disordered stretches follow at residues 219-258 (RKSR…VGVE) and 297-316 (SSGH…RSQS). Residues 347–690 (DDWGPCAEHG…YLNLYPVARQ (344 aa)) are polymerase/reverse transcriptase domain (RT). Residues 357-600 (EHRIRTPRTP…YSLNFMGYVI (244 aa)) form the Reverse transcriptase domain. Asp429, Asp551, and Asp552 together coordinate Mg(2+).

The protein belongs to the hepadnaviridae P protein family.

It catalyses the reaction DNA(n) + a 2'-deoxyribonucleoside 5'-triphosphate = DNA(n+1) + diphosphate. The enzyme catalyses Endonucleolytic cleavage to 5'-phosphomonoester.. Activated by host HSP70 and HSP40 in vitro to be able to bind the epsilon loop of the pgRNA. Because deletion of the RNase H region renders the protein partly chaperone-independent, the chaperones may be needed indirectly to relieve occlusion of the RNA-binding site by this domain. Inhibited by several reverse-transcriptase inhibitors: Lamivudine, Adefovir and Entecavir. In terms of biological role, multifunctional enzyme that converts the viral RNA genome into dsDNA in viral cytoplasmic capsids. This enzyme displays a DNA polymerase activity that can copy either DNA or RNA templates, and a ribonuclease H (RNase H) activity that cleaves the RNA strand of RNA-DNA heteroduplexes in a partially processive 3'- to 5'-endonucleasic mode. Neo-synthesized pregenomic RNA (pgRNA) are encapsidated together with the P protein, and reverse-transcribed inside the nucleocapsid. Initiation of reverse-transcription occurs first by binding the epsilon loop on the pgRNA genome, and is initiated by protein priming, thereby the 5'-end of (-)DNA is covalently linked to P protein. Partial (+)DNA is synthesized from the (-)DNA template and generates the relaxed circular DNA (RC-DNA) genome. After budding and infection, the RC-DNA migrates in the nucleus, and is converted into a plasmid-like covalently closed circular DNA (cccDNA). The activity of P protein does not seem to be necessary for cccDNA generation, and is presumably released from (+)DNA by host nuclear DNA repair machinery. The protein is Protein P of Hepatitis B virus genotype B1 (isolate Japan/Ry30/2002) (HBV-B).